An 850-amino-acid chain; its full sequence is Pre-mRNA-splicing factor SYF1 (850 aa).

HAT repeat units follow at residues 10–42 (GLLCEDDIPYEQEVAKNPNNLSNWLRYYRFKSS), 46–78 (CTFQNRVFILERAVKQLPRSYKLWMIYIDVVLQ), 90–122 (SEILSVNMVFERSLQLLNRAPILWIKYLEFLVE), 126–160 (YEITLLRRKFNECLYNLPISQHHLIWPLYIRFADD), 208–247 (GDVKEASKLFQHILQHTDKFIGLSKSPLQLWIEYIDLLVN), 408–442 (AALRTINPLKAHSLANKKENTLPNLWINYANVYAS), 444–480 (NDVKTANLIFSKSVKSQFQSPDDLATLYIEWCELFVK), 500–531 (GKFDYNDSSIDIHIRVQKSIKLWSFYLDLLES), 574–609 (NFYERSFSAYEMGLKIFKDSKIKFEIWNIYLSKIIK), 612–653 (LNIE…QYEQ), 708–744 (NDHNETRKIYEQSLKDNQLTLPNLIQLTMEFINFETE), and 746–782 (MEFNRVRSLFKYVCQLSNPQSPLIEPIWHNWETFELN).

Belongs to the crooked-neck family. As to quaternary structure, associated with the spliceosome.

It localises to the nucleus. Its function is as follows. Involved in pre-mRNA splicing and cell cycle progression. The polypeptide is Pre-mRNA-splicing factor SYF1 (SYF1) (Debaryomyces hansenii (strain ATCC 36239 / CBS 767 / BCRC 21394 / JCM 1990 / NBRC 0083 / IGC 2968) (Yeast)).